The chain runs to 430 residues: Dihydroorotase (430 aa).

Zn(2+)-binding residues include H60 and H62. Substrate contacts are provided by residues 62 to 64 (HLR) and N94. Zn(2+) contacts are provided by D152, H179, H232, and D305. The active site involves D305. Residues H309 and 323 to 324 (FG) contribute to the substrate site.

It belongs to the metallo-dependent hydrolases superfamily. DHOase family. Class I DHOase subfamily. It depends on Zn(2+) as a cofactor.

It carries out the reaction (S)-dihydroorotate + H2O = N-carbamoyl-L-aspartate + H(+). It participates in pyrimidine metabolism; UMP biosynthesis via de novo pathway; (S)-dihydroorotate from bicarbonate: step 3/3. Catalyzes the reversible cyclization of carbamoyl aspartate to dihydroorotate. The sequence is that of Dihydroorotase from Solibacter usitatus (strain Ellin6076).